Reading from the N-terminus, the 144-residue chain is Bacilliredoxin BH1716 (144 aa).

Belongs to the bacilliredoxin family.

This Halalkalibacterium halodurans (strain ATCC BAA-125 / DSM 18197 / FERM 7344 / JCM 9153 / C-125) (Bacillus halodurans) protein is Bacilliredoxin BH1716.